The following is a 254-amino-acid chain: 5-oxoprolinase subunit A (254 aa).

This sequence belongs to the LamB/PxpA family. As to quaternary structure, forms a complex composed of PxpA, PxpB and PxpC.

It carries out the reaction 5-oxo-L-proline + ATP + 2 H2O = L-glutamate + ADP + phosphate + H(+). Catalyzes the cleavage of 5-oxoproline to form L-glutamate coupled to the hydrolysis of ATP to ADP and inorganic phosphate. The polypeptide is 5-oxoprolinase subunit A (Burkholderia mallei (strain NCTC 10247)).